The primary structure comprises 463 residues: Nitrate/nitrite antiporter NarK (463 aa).

Residues 1–37 (MSHSSAPERATGAVITDWRPEDPAFWQQRGQRIASRN) lie on the Cytoplasmic side of the membrane. The chain crosses the membrane as a helical span at residues 38-59 (LWISVPCLLLAFCVWMLFSAVA). Over 60–73 (VNLPKVGFNFTTDQ) the chain is Periplasmic. Residues 74–95 (LFMLTALPSVSGALLRVPYSFM) traverse the membrane as a helical segment. Nitrate is bound at residue Arg-89. A nitrite-binding site is contributed by Arg-89. Residues 96–102 (VPIFGGR) are Cytoplasmic-facing. The helical transmembrane segment at 103 to 122 (RWTAFSTGILIIPCVWLGFA) threads the bilayer. Residues 123 to 130 (VQDTSTPY) are Periplasmic-facing. A helical membrane pass occupies residues 131–151 (SVFIIISLLCGFAGANFASSM). At 152–166 (ANISFFFPKQKQGGA) the chain is on the cytoplasmic side. Residues 167 to 189 (LGLNGGLGNMGVSVMQLVAPLVV) form a helical membrane-spanning segment. Asn-175 is a nitrate binding site. The Periplasmic segment spans residues 190-211 (SLSIFAVFGSQGVKQPDGTELY). The chain crosses the membrane as a helical span at residues 212-233 (LANASWIWVPFLAIFTIAAWFG). Over 234 to 253 (MNDLATSKASIKEQLPVLKR) the chain is Cytoplasmic. Residues 254 to 281 (GHLWIMSLLYLATFGSFIGFSAGFAMLS) form a helical membrane-spanning segment. Residue Tyr-263 coordinates nitrate. Tyr-263 contributes to the nitrite binding site. At 282–289 (KTQFPDVQ) the chain is on the periplasmic side. A helical membrane pass occupies residues 290-312 (ILQYAFFGPFIGALARSAGGALS). The Cytoplasmic portion of the chain corresponds to 313-316 (DRLG). The helical transmembrane segment at 317 to 338 (GTRVTLVNFILMAIFSGLLFLT) threads the bilayer. Residues 339 to 347 (LPTDGQGGS) lie on the Periplasmic side of the membrane. Residues 348–373 (FMAFFAVFLALFLTAGLGSGSTFQMI) traverse the membrane as a helical segment. The Cytoplasmic portion of the chain corresponds to 374-405 (SVIFRKLTMDRVKAEGGSDERAMREAATDTAA). Residues 406–427 (ALGFISAIGAIGGFFIPKAFGS) traverse the membrane as a helical segment. Ser-411 is a binding site for nitrate. Residues 428-435 (SLALTGSP) lie on the Periplasmic side of the membrane. The helical transmembrane segment at 436–458 (VGAMKVFLIFYIACVVITWAVYG) threads the bilayer. Over 459–463 (RHSKK) the chain is Cytoplasmic.

This sequence belongs to the major facilitator superfamily. Nitrate/nitrite porter (TC 2.A.1.8) family.

It localises to the cell inner membrane. It carries out the reaction nitrate(in) + nitrite(out) = nitrate(out) + nitrite(in). Its function is as follows. Catalyzes nitrate uptake, nitrite uptake and nitrite export across the cytoplasmic membrane. Functions as a nitrate/nitrite exchanger, and protons are unlikely to be co-transported. The protein is Nitrate/nitrite antiporter NarK of Escherichia coli (strain K12).